The sequence spans 198 residues: uncharacterized protein (198 aa).

Positions 20-58 (ERVRRDEELARLSADKEQAKNDLEESKRRIARLRGTVYE) form a coiled coil. The disordered stretch occupies residues 144–198 (LSNRKTKNPESDRRRQSRKKKSTQIQASDEMKHRRHHVHKVHHYSQKQSSSTTRR). Positions 176–188 (HRRHHVHKVHHYS) are enriched in basic residues. Polar residues predominate over residues 189–198 (QKQSSSTTRR).

Its subcellular location is the nucleus. The protein resides in the nucleolus. This is an uncharacterized protein from Schizosaccharomyces pombe (strain 972 / ATCC 24843) (Fission yeast).